A 292-amino-acid chain; its full sequence is Glycine--tRNA ligase alpha subunit (292 aa).

The protein belongs to the class-II aminoacyl-tRNA synthetase family. As to quaternary structure, tetramer of two alpha and two beta subunits.

It is found in the cytoplasm. The catalysed reaction is tRNA(Gly) + glycine + ATP = glycyl-tRNA(Gly) + AMP + diphosphate. The protein is Glycine--tRNA ligase alpha subunit of Syntrophus aciditrophicus (strain SB).